The chain runs to 171 residues: Adenine phosphoribosyltransferase (171 aa).

This sequence belongs to the purine/pyrimidine phosphoribosyltransferase family. In terms of assembly, homodimer.

The protein localises to the cytoplasm. The enzyme catalyses AMP + diphosphate = 5-phospho-alpha-D-ribose 1-diphosphate + adenine. The protein operates within purine metabolism; AMP biosynthesis via salvage pathway; AMP from adenine: step 1/1. Functionally, catalyzes a salvage reaction resulting in the formation of AMP, that is energically less costly than de novo synthesis. This is Adenine phosphoribosyltransferase from Geotalea uraniireducens (strain Rf4) (Geobacter uraniireducens).